The chain runs to 456 residues: CBL-interacting protein kinase 16 (456 aa).

Positions 22 to 277 (YELGRLLGQG…IPEIMRTPWF (256 aa)) constitute a Protein kinase domain. Residues 28-36 (LGQGTFAKV) and K51 contribute to the ATP site. Residue D145 is the Proton acceptor of the active site. Residues 163–192 (DFGLAALPEQLRQDGLLHTQCGTPAYVAPE) form an activation loop region. Positions 309–335 (AMSPRTCNAFQLISSMSSGFDLSGMFE) constitute an NAF domain. The interval 339-368 (KAATVFTSRAPAATVIQKLEAVGRSLGYSA) is PPI.

It belongs to the protein kinase superfamily. CAMK Ser/Thr protein kinase family. SNF1 subfamily. The cofactor is Mn(2+).

The catalysed reaction is L-seryl-[protein] + ATP = O-phospho-L-seryl-[protein] + ADP + H(+). It carries out the reaction L-threonyl-[protein] + ATP = O-phospho-L-threonyl-[protein] + ADP + H(+). In terms of biological role, CIPK serine-threonine protein kinases interact with CBL proteins. Binding of a CBL protein to the regulatory NAF domain of CIPK protein lead to the activation of the kinase in a calcium-dependent manner. The polypeptide is CBL-interacting protein kinase 16 (CIPK16) (Oryza sativa subsp. japonica (Rice)).